Here is a 194-residue protein sequence, read N- to C-terminus: Imidazoleglycerol-phosphate dehydratase (194 aa).

Belongs to the imidazoleglycerol-phosphate dehydratase family.

The protein resides in the cytoplasm. The enzyme catalyses D-erythro-1-(imidazol-4-yl)glycerol 3-phosphate = 3-(imidazol-4-yl)-2-oxopropyl phosphate + H2O. Its pathway is amino-acid biosynthesis; L-histidine biosynthesis; L-histidine from 5-phospho-alpha-D-ribose 1-diphosphate: step 6/9. This chain is Imidazoleglycerol-phosphate dehydratase, found in Caldicellulosiruptor saccharolyticus (strain ATCC 43494 / DSM 8903 / Tp8T 6331).